Consider the following 487-residue polypeptide: MSDDKPFLCTAPGCGQRFTNEDHLAVHKHKHEMTLKFGPARNDSVIVADQTPTPTRFLKNCEEVGLFNELASPFENEFKKASEDDIKKMPLDLSPLATPIIRSKIEEPSVVETTHQDSPLPHPESTTSDEKEVPLAQTAQPTSAIVRPASLQVPNVLLTSSDSSVIIQQAVPSPTSSTVITQAPSSNRPIVPVPGPFPLLLHLPNGQTMPVAIPASITSSNVHVPAAVPLVRPVTMVPSVPGIPGPSSPQPVQSEAKMRLKAALTQQHPPVTNGDTVKGHGSGLVRTQSEESRPQSLQQPATSTTETPASPAHTTPQTQNTSGRRRRAANEDPDEKRRKFLERNRAAASRCRQKRKVWVQSLEKKAEDLSSLNGQLQSEVTLLRNEVAQLKQLLLAHKDCPVTAMQKKSGYHTADKDDSSEDLSVPSSPHTEAIQHSSVSTSNGVSSTSKAEAVATSVLTQMADQSTEPALSQIVMAPPSQAQPSGS.

Residues 7–31 (FLCTAPGCGQRFTNEDHLAVHKHKH) form a C2H2-type zinc finger. A Phosphothreonine; by PKC/PRKCH modification is found at Thr34. The residue at position 44 (Ser44) is a Phosphoserine. Thr51 carries the phosphothreonine; by MAPK11 and MAPK14 modification. The residue at position 53 (Thr53) is a Phosphothreonine; by MAPK1, MAPK3, MAPK11, MAPK12, MAPK14 and PLK3. At Thr55 the chain carries Phosphothreonine; by VRK1. Phosphoserine occurs at positions 72 and 94. At Thr98 the chain carries Phosphothreonine. Ser103 bears the Phosphoserine; by PKC/PRKCA and PKC/PRKCB mark. 2 disordered regions span residues 106–137 (EEPS…PLAQ) and 241–355 (PGIP…RQKR). Ser118 bears the Phosphoserine mark. Polar residues predominate over residues 264–275 (LTQQHPPVTNGD). Residues 278 to 281 (KGHG) are essential for its histone acetyltransferase activity. The span at 300-316 (PATSTTETPASPAHTTP) shows a compositional bias: low complexity. Ser310 is subject to Phosphoserine. Ser322 carries the phosphoserine; by PKC/PRKCA and PKC/PRKCB modification. Residues 328 to 345 (AANEDPDEKRRKFLERNR) show a composition bias toward basic and acidic residues. Residues 334–397 (DEKRRKFLER…AQLKQLLLAH (64 aa)) form the bZIP domain. Residues 336 to 356 (KRRKFLERNRAAASRCRQKRK) form a basic motif region. Residue Lys339 is modified to N6-acetyllysine. Position 349 is a phosphoserine; by PKC/PRKCA and PKC/PRKCB (Ser349). Residue Lys356 is modified to N6-acetyllysine. The leucine-zipper stretch occupies residues 362-390 (LEKKAEDLSSLNGQLQSEVTLLRNEVAQL). Positions 387–396 (VAQLKQLLLA) match the Nuclear export signal motif. The disordered stretch occupies residues 407 to 453 (KKSGYHTADKDDSSEDLSVPSSPHTEAIQHSSVSTSNGVSSTSKAEA). Phosphoserine is present on residues Ser424 and Ser428. Positions 425-436 (VPSSPHTEAIQH) are enriched in polar residues. Residues 437-449 (SSVSTSNGVSSTS) show a composition bias toward low complexity. Residues Ser472 and Ser480 each carry the phosphoserine; by ATM modification.

It belongs to the bZIP family. ATF subfamily. Binds DNA as a dimer and can form a homodimer in the absence of DNA. Can form a heterodimer with JUN. Heterodimerization is essential for its transcriptional activity. Interacts with SMAD3 and SMAD4. Interacts with the HK1/VDAC1 complex. Interacts with NBN, MRE11, XPO1, KAT5 and CUL3. Binds through its N-terminal region to UTF1 which acts as a coactivator of ATF2 transcriptional activity. Post-translationally, phosphorylation of Thr-51 by MAPK14 and MAPK11, and at Thr-53 by MAPK1/ERK2, MAPK3/ERK1, MAPK11, MAPK12 and MAPK14 in response to external stimulus like insulin causes increased transcriptional activity. Phosphorylated by PLK3 following hyperosmotic stress. Also phosphorylated and activated by JNK and CaMK4. ATM-mediated phosphorylation at Ser-472 and Ser-480 stimulates its function in DNA damage response. Phosphorylation at Ser-44, Thr-55 and Ser-103 activates its transcriptional activity. Phosphorylation at Thr-51 or Thr-53 enhances acetylation of histones H2B and H4.

The protein resides in the nucleus. It localises to the cytoplasm. Its subcellular location is the mitochondrion outer membrane. Transcriptional activator which regulates the transcription of various genes, including those involved in anti-apoptosis, cell growth, and DNA damage response. Dependent on its binding partner, binds to CRE (cAMP response element) consensus sequences (5'-TGACGTCA-3') or to AP-1 (activator protein 1) consensus sequences (5'-TGACTCA-3'). In the nucleus, contributes to global transcription and the DNA damage response, in addition to specific transcriptional activities that are related to cell development, proliferation and death. In the cytoplasm, interacts with and perturbs HK1- and VDAC1-containing complexes at the mitochondrial outer membrane, thereby impairing mitochondrial membrane potential, inducing mitochondrial leakage and promoting cell death. The phosphorylated form (mediated by ATM) plays a role in the DNA damage response and is involved in the ionizing radiation (IR)-induced S phase checkpoint control and in the recruitment of the MRN complex into the IR-induced foci (IRIF). Exhibits histone acetyltransferase (HAT) activity which specifically acetylates histones H2B and H4 in vitro. In concert with CUL3 and RBX1, promotes the degradation of KAT5 thereby attenuating its ability to acetylate and activate ATM. Can elicit oncogenic or tumor suppressor activities depending on the tissue or cell type. This is Cyclic AMP-dependent transcription factor ATF-2 (Atf2) from Mus musculus (Mouse).